Reading from the N-terminus, the 347-residue chain is Protein RecA (347 aa).

ATP is bound at residue 80 to 87 (GPESSGKT).

It belongs to the RecA family.

The protein localises to the cytoplasm. Can catalyze the hydrolysis of ATP in the presence of single-stranded DNA, the ATP-dependent uptake of single-stranded DNA by duplex DNA, and the ATP-dependent hybridization of homologous single-stranded DNAs. It interacts with LexA causing its activation and leading to its autocatalytic cleavage. The chain is Protein RecA from Chlorobaculum parvum (strain DSM 263 / NCIMB 8327) (Chlorobium vibrioforme subsp. thiosulfatophilum).